A 194-amino-acid polypeptide reads, in one-letter code: MVEKSIVQEAKDIQLAMELITLGARLQMLESETQLSRGRLIRLYKELRGSPPPKGMLPFSTDWFMTWEQNIHSSMFYNAYRFLLKSGHCEGVEVVVKAYRLYLEQCPPGNNGDAPILALTRAWTLVRFVDSGMLQPTECRCCGGTFITHAHQPVNSFVCSLCQPPSRAVKKRKLSPQPADTNSQLLDGFAQKAM.

Residues cysteine 139, cysteine 142, cysteine 159, and cysteine 162 each contribute to the Zn(2+) site.

The protein belongs to the FlhC family. As to quaternary structure, heterohexamer composed of two FlhC and four FlhD subunits. Each FlhC binds a FlhD dimer, forming a heterotrimer, and a hexamer assembles by dimerization of two heterotrimers. Zn(2+) serves as cofactor.

It is found in the cytoplasm. Its function is as follows. Functions in complex with FlhD as a master transcriptional regulator that regulates transcription of several flagellar and non-flagellar operons by binding to their promoter region. Activates expression of class 2 flagellar genes, including fliA, which is a flagellum-specific sigma factor that turns on the class 3 genes. Also regulates genes whose products function in a variety of physiological pathways. In Xenorhabdus nematophila (Achromobacter nematophilus), this protein is Flagellar transcriptional regulator FlhC.